The sequence spans 208 residues: Uracil phosphoribosyltransferase (208 aa).

5-phospho-alpha-D-ribose 1-diphosphate-binding positions include Arg78, Arg103, and 130–138; that span reads DPMLATGGS. Uracil-binding positions include Ile193 and 198 to 200; that span reads GDA. Position 199 (Asp199) interacts with 5-phospho-alpha-D-ribose 1-diphosphate.

It belongs to the UPRTase family. Mg(2+) serves as cofactor.

It carries out the reaction UMP + diphosphate = 5-phospho-alpha-D-ribose 1-diphosphate + uracil. Its pathway is pyrimidine metabolism; UMP biosynthesis via salvage pathway; UMP from uracil: step 1/1. Its activity is regulated as follows. Allosterically activated by GTP. Functionally, catalyzes the conversion of uracil and 5-phospho-alpha-D-ribose 1-diphosphate (PRPP) to UMP and diphosphate. This Aliivibrio salmonicida (strain LFI1238) (Vibrio salmonicida (strain LFI1238)) protein is Uracil phosphoribosyltransferase.